A 296-amino-acid polypeptide reads, in one-letter code: Nucleotide-binding protein SPT_1506 (296 aa).

Residue 13 to 20 participates in ATP binding; it reads GMSGAGKT. Position 63 to 66 (63 to 66) interacts with GTP; it reads DMRS.

It belongs to the RapZ-like family.

Its function is as follows. Displays ATPase and GTPase activities. The protein is Nucleotide-binding protein SPT_1506 of Streptococcus pneumoniae (strain Taiwan19F-14).